We begin with the raw amino-acid sequence, 150 residues long: Large ribosomal subunit protein uL13 (150 aa).

Belongs to the universal ribosomal protein uL13 family. As to quaternary structure, part of the 50S ribosomal subunit.

Functionally, this protein is one of the early assembly proteins of the 50S ribosomal subunit, although it is not seen to bind rRNA by itself. It is important during the early stages of 50S assembly. The chain is Large ribosomal subunit protein uL13 from Chlamydia trachomatis serovar A (strain ATCC VR-571B / DSM 19440 / HAR-13).